Consider the following 27-residue polypeptide: Cysteine-rich venom protein tropirin (27 aa).

This sequence belongs to the CRISP family. Post-translationally, contains 8 disulfide bonds. As to expression, expressed by the venom gland.

It is found in the secreted. Functionally, blocks contraction of smooth muscle elicited by high potassium-induced depolarization, but does not block caffeine-stimulated contraction. May target voltage-gated calcium channels on smooth muscle. In Tropidechis carinatus (Australian rough-scaled snake), this protein is Cysteine-rich venom protein tropirin.